The following is a 781-amino-acid chain: Mitochondrial inner membrane m-AAA protease component paraplegin (781 aa).

Residues 1–43 (MAAALLLLRGLRPGPEPRPRRLWGLLSGRGPGLSSGAGARRPY) constitute a mitochondrion transit peptide. Disordered regions lie at residues 22-56 (LWGL…AAAG) and 103-135 (TSRM…ERED). Residues 36-56 (GAGARRPYAARGTPVGPAAAG) are compositionally biased toward low complexity. The propeptide at 44 to 105 (AARGTPVGPA…GSTLYFNTSR (62 aa)) is removed in mature form. Over 106–144 (MKQKNKDNDKPKGKTPEDDEEEKRRKEREDQMYRERLRT) the chain is Mitochondrial matrix. The span at 109–135 (KNKDNDKPKGKTPEDDEEEKRRKERED) shows a compositional bias: basic and acidic residues. A helical transmembrane segment spans residues 145–165 (LFIIALVMSLLNSLSTSGGSI). At 166-248 (SWADFVNEML…DRIPVSYKRT (83 aa)) the chain is on the mitochondrial intermembrane side. Residues 249-269 (GFFGNALYALGMTAVGLAILW) form a helical membrane-spanning segment. Residues 270–781 (YVFRLAGMTG…ASGEEEAPAP (512 aa)) lie on the Mitochondrial matrix side of the membrane. ATP is bound by residues A312, G352, C353, G354, K355, T356, and L357. 3'-nitrotyrosine is present on Y505. H574 provides a ligand contact to Zn(2+). The active site involves E575. The Zn(2+) site is built by H578 and D650. The interaction with PPIF stretch occupies residues 701-781 (HEAKLLVAKA…ASGEEEAPAP (81 aa)).

In the N-terminal section; belongs to the AAA ATPase family. The protein in the C-terminal section; belongs to the peptidase M41 family. Forms heterohexamers with SPG7 and AFG3L1. The m-AAA protease is either composed of homohexamers of AFG3L2 or heterohexamers of AFG3L1, AFG3L2 and/or SPG7. Component of the mitochondrial permeability transition pore complex (mPTPC), at least composed of SPG7, VDAC1 and PPIF. Interacts with MAIP1. Requires Zn(2+) as cofactor. Upon import into the mitochondrion, the N-terminal transit peptide is cleaved by the mitochondrial-processing peptidase (MPP) to generate an intermediate form which undergoes a second proteolytic cleavage mediated by proteases AFG3L1 and/or AFG3L2 removing an additional N-terminal fragment to generate the proteolytically active mature form. Expressed in the brain and retina (at protein level).

The protein resides in the mitochondrion inner membrane. The catalysed reaction is ATP + H2O = ADP + phosphate + H(+). Its function is as follows. Catalytic component of the m-AAA protease, a protease that plays a key role in proteostasis of inner mitochondrial membrane proteins, and which is essential for axonal and neuron development. SPG7 possesses both ATPase and protease activities: the ATPase activity is required to unfold substrates, threading them into the internal proteolytic cavity for hydrolysis into small peptide fragments. The m-AAA protease exerts a dual role in the mitochondrial inner membrane: it mediates the processing of specific regulatory proteins and ensures protein quality control by degrading misfolded polypeptides. Mediates protein maturation of the mitochondrial ribosomal subunit MRPL32/bL32m by catalyzing the cleavage of the presequence of MRPL32/bL32m prior to assembly into the mitochondrial ribosome. Acts as a regulator of calcium in neurons by mediating degradation of SMDT1/EMRE before its assembly with the uniporter complex, limiting the availability of SMDT1/EMRE for MCU assembly and promoting efficient assembly of gatekeeper subunits with MCU. Also regulates mitochondrial calcium by catalyzing degradation of MCU. Plays a role in the formation and regulation of the mitochondrial permeability transition pore (mPTP) and its proteolytic activity is dispensable for this function. In Mus musculus (Mouse), this protein is Mitochondrial inner membrane m-AAA protease component paraplegin.